The chain runs to 1228 residues: DNA-directed RNA polymerase subunit beta (1228 aa).

The protein belongs to the RNA polymerase beta chain family. In terms of assembly, the RNAP catalytic core consists of 2 alpha, 1 beta, 1 beta' and 1 omega subunit. When a sigma factor is associated with the core the holoenzyme is formed, which can initiate transcription.

The catalysed reaction is RNA(n) + a ribonucleoside 5'-triphosphate = RNA(n+1) + diphosphate. Its function is as follows. DNA-dependent RNA polymerase catalyzes the transcription of DNA into RNA using the four ribonucleoside triphosphates as substrates. In Leptospira biflexa serovar Patoc (strain Patoc 1 / Ames), this protein is DNA-directed RNA polymerase subunit beta.